The chain runs to 85 residues: Putative membrane protein insertion efficiency factor (85 aa).

Belongs to the UPF0161 family.

Its subcellular location is the cell inner membrane. Could be involved in insertion of integral membrane proteins into the membrane. The sequence is that of Putative membrane protein insertion efficiency factor from Escherichia coli O157:H7.